Consider the following 209-residue polypeptide: Small ribosomal subunit protein eS1 (209 aa).

It belongs to the eukaryotic ribosomal protein eS1 family.

In Picrophilus torridus (strain ATCC 700027 / DSM 9790 / JCM 10055 / NBRC 100828 / KAW 2/3), this protein is Small ribosomal subunit protein eS1.